A 226-amino-acid chain; its full sequence is Lipoprotein-releasing system ATP-binding protein LolD (226 aa).

The region spanning 5–226 (LRCEKISKFY…MADGVLREAS (222 aa)) is the ABC transporter domain. 41–48 (GSSGSGKS) provides a ligand contact to ATP.

Belongs to the ABC transporter superfamily. Lipoprotein translocase (TC 3.A.1.125) family. As to quaternary structure, the complex is composed of two ATP-binding proteins (LolD) and two transmembrane proteins (LolC and LolE).

The protein resides in the cell inner membrane. Part of the ABC transporter complex LolCDE involved in the translocation of mature outer membrane-directed lipoproteins, from the inner membrane to the periplasmic chaperone, LolA. Responsible for the formation of the LolA-lipoprotein complex in an ATP-dependent manner. This Haemophilus ducreyi (strain 35000HP / ATCC 700724) protein is Lipoprotein-releasing system ATP-binding protein LolD.